The primary structure comprises 123 residues: MIQEQTMLDVADNSGARSVMCIKVLGGSHRRYAAIGDIIKVTVKEAIPRGKVKKGDVLKAVVVRTKKGVRRPDGAVIRFDGNACVILNNNTEQPIGTRIFGPVTRELRSEKFMKIISLAPEVL.

It belongs to the universal ribosomal protein uL14 family. As to quaternary structure, part of the 50S ribosomal subunit. Forms a cluster with proteins L3 and L19. In the 70S ribosome, L14 and L19 interact and together make contacts with the 16S rRNA in bridges B5 and B8.

Binds to 23S rRNA. Forms part of two intersubunit bridges in the 70S ribosome. This chain is Large ribosomal subunit protein uL14, found in Histophilus somni (strain 129Pt) (Haemophilus somnus).